Reading from the N-terminus, the 427-residue chain is L-cysteine:1D-myo-inositol 2-amino-2-deoxy-alpha-D-glucopyranoside ligase (427 aa).

C46 is a Zn(2+) binding site. L-cysteinyl-5'-AMP-binding positions include 46–49 (CGIT), T61, and 84–86 (NVT). The 'HIGH' region motif lies at 48–58 (ITPYDATHMGH). The short motif at 186–191 (ERGGDP) is the 'ERGGDP' region element. W233 contacts L-cysteinyl-5'-AMP. C237 contacts Zn(2+). 255–257 (GSD) is a binding site for L-cysteinyl-5'-AMP. H262 serves as a coordination point for Zn(2+). Residue V289 coordinates L-cysteinyl-5'-AMP. Residues 295-299 (KMSKS) carry the 'KMSKS' region motif.

Belongs to the class-I aminoacyl-tRNA synthetase family. MshC subfamily. Monomer. It depends on Zn(2+) as a cofactor.

The catalysed reaction is 1D-myo-inositol 2-amino-2-deoxy-alpha-D-glucopyranoside + L-cysteine + ATP = 1D-myo-inositol 2-(L-cysteinylamino)-2-deoxy-alpha-D-glucopyranoside + AMP + diphosphate + H(+). Functionally, catalyzes the ATP-dependent condensation of GlcN-Ins and L-cysteine to form L-Cys-GlcN-Ins. This Catenulispora acidiphila (strain DSM 44928 / JCM 14897 / NBRC 102108 / NRRL B-24433 / ID139908) protein is L-cysteine:1D-myo-inositol 2-amino-2-deoxy-alpha-D-glucopyranoside ligase.